The primary structure comprises 95 residues: Putative protein RDUR (95 aa).

Over residues 1–12 (MNNSFNKEDRMS) the composition is skewed to basic and acidic residues. Residues 1-20 (MNNSFNKEDRMSSDTMVGSC) are disordered.

Functionally, could play a role in innate immunity against viruses. The protein is Putative protein RDUR of Homo sapiens (Human).